Here is a 590-residue protein sequence, read N- to C-terminus: Ovarian abundant message protein (590 aa).

A disordered region spans residues 1-71; sequence MQGTDNAPPG…SPGQPLVEEQ (71 aa). Residues 18-29 are compositionally biased toward basic residues; the sequence is SPRRIRHVRRHY. 27 tandem repeats follow at residues 66–71, 72–77, 78–83, 84–89, 90–95, 96–101, 102–107, 108–113, 114–119, 120–125, 126–131, 132–137, 138–143, 144–149, 150–155, 156–161, 162–167, 168–173, 174–179, 180–185, 300–305, 306–311, 312–317, 318–323, 324–329, 330–335, and 336–341. The tract at residues 66–185 is 20 X 6 AA tandem repeats of P-[LP]-V-[EG]-[EG]-[QR]; the sequence is PLVEEQPLVE…VEGQPLVEGQ (120 aa). Residues 300–347 are 8 X 6 AA approximate tandem repeats of P-L-A-[GV]-[AV]-[PL]; sequence PLAGAPPLAGVPPLAVALPLAGAPPLAGVPPLAGAPPLAGALPRAGVL. A 2-8; approximate repeat occupies 342–347; the sequence is PRAGVL. Tandem repeats lie at residues 348–353, 354–359, 360–365, 366–371, 372–377, 378–383, 384–389, 390–395, 396–401, 402–407, 408–413, 419–424, 425–430, 431–436, 437–442, and 443–448. Residues 348 to 413 form an 11 X 6 AA tandem repeats of approximate R-R-A-[GD]-V-[LV] region; sequence RRAGVLRRAG…ADVLRRADVV (66 aa). A 6 X 6 AA approximate tandem repeats of Q-[QR]-L-A-D-V region spans residues 419–454; it reads QQLADVQRLADVQRLADVQRLADVQRLADVQRLVCV. The stretch at 449-454 is one 4-6; approximate repeat; it reads QRLVCV.

Somatic ovarian tissue.

This is Ovarian abundant message protein (OAM) from Ascaris suum (Pig roundworm).